The chain runs to 218 residues: Large ribosomal subunit protein uL3 (218 aa).

This sequence belongs to the universal ribosomal protein uL3 family. Part of the 50S ribosomal subunit. Forms a cluster with proteins L14 and L19.

Functionally, one of the primary rRNA binding proteins, it binds directly near the 3'-end of the 23S rRNA, where it nucleates assembly of the 50S subunit. This Corynebacterium aurimucosum (strain ATCC 700975 / DSM 44827 / CIP 107346 / CN-1) (Corynebacterium nigricans) protein is Large ribosomal subunit protein uL3.